The following is a 1410-amino-acid chain: Non-secreted LysM effector LysM15 (1410 aa).

LysM domains are found at residues 1179 to 1225 (TTYT…DICM) and 1231 to 1277 (TQYT…EILG). Residues 1291–1303 (TTGDGITTTPGNG) are compositionally biased toward low complexity. Positions 1291 to 1317 (TTGDGITTTPGNGEYAQGVVSPPENST) are disordered. The LysM 3 domain maps to 1328–1375 (RWYSATADDLCVQICLKSGVSAKLFKAANPSLAADCDNSLIAGDAYCV).

Belongs to the secreted LysM effector family.

In terms of biological role, non-secreted LysM effector that might be involved in manipulation of host defenses for successful infection. The protein is Non-secreted LysM effector LysM15 of Penicillium expansum (Blue mold rot fungus).